Consider the following 1396-residue polypeptide: DNA-directed RNA polymerase subunit beta' (1396 aa).

Zn(2+) contacts are provided by Cys72, Cys74, Cys87, and Cys90. Positions 463, 465, and 467 each coordinate Mg(2+). 4 residues coordinate Zn(2+): Cys814, Cys889, Cys896, and Cys899.

This sequence belongs to the RNA polymerase beta' chain family. The RNAP catalytic core consists of 2 alpha, 1 beta, 1 beta' and 1 omega subunit. When a sigma factor is associated with the core the holoenzyme is formed, which can initiate transcription. Requires Mg(2+) as cofactor. Zn(2+) is required as a cofactor.

The enzyme catalyses RNA(n) + a ribonucleoside 5'-triphosphate = RNA(n+1) + diphosphate. Functionally, DNA-dependent RNA polymerase catalyzes the transcription of DNA into RNA using the four ribonucleoside triphosphates as substrates. This Chlamydia trachomatis serovar L2 (strain ATCC VR-902B / DSM 19102 / 434/Bu) protein is DNA-directed RNA polymerase subunit beta'.